The chain runs to 409 residues: Wadjet protein JetD (409 aa).

Functionally, component of antiplasmid transformation system Wadjet type I, composed of JetA, JetB, JetC and JetD. Expression of Wadjet type I in B.subtilis (strain BEST7003) reduces the transformation efficiency of plasmid pHCMC05. The chain is Wadjet protein JetD from Bacillus cereus (strain Q1).